Here is a 119-residue protein sequence, read N- to C-terminus: uncharacterized protein (119 aa).

2 consecutive transmembrane segments (helical) span residues 7–27 (ILHN…LLLV) and 32–52 (YFFE…FLML).

The protein localises to the membrane. This is an uncharacterized protein from Saccharomyces cerevisiae (strain ATCC 204508 / S288c) (Baker's yeast).